The chain runs to 144 residues: Sentan (144 aa).

A disordered region spans residues 1-31 (MCGCRASVPSTKHYSVNPAPTTRSPPAAAGM). The span at 18 to 29 (PAPTTRSPPAAA) shows a compositional bias: low complexity.

This sequence belongs to the S-100 family.

The protein resides in the cell projection. The protein localises to the cilium. Functionally, may be a component of the linker structure that bridges the ciliary membrane and peripheral singlet microtubules. This is Sentan from Gallus gallus (Chicken).